Here is a 140-residue protein sequence, read N- to C-terminus: Large ribosomal subunit protein bL17 (140 aa).

This sequence belongs to the bacterial ribosomal protein bL17 family. Part of the 50S ribosomal subunit. Contacts protein L32.

This Rhizobium etli (strain CIAT 652) protein is Large ribosomal subunit protein bL17.